The chain runs to 296 residues: 4-hydroxybenzoate octaprenyltransferase (296 aa).

8 helical membrane passes run 28-48, 52-72, 102-122, 145-167, 174-196, 219-239, 241-261, and 275-295; these read PIGIYLLLWPTLSAVWIAGNG, LANVLIFGLGVVLMRAAGCCI, ALALFAMLVGVSFLLVLCTNS, TYYPQVVLGAAYSWGIPMAFTAA, SAWLLYIANLLWTVGYDTYYAMV, NIILTLQLLSLGCLLLAGSRF, LGGWFHLGLLGAAACFAWEYW, and FLHNHWAGLLVFIGVVLDYAF.

It belongs to the UbiA prenyltransferase family. The cofactor is Mg(2+).

The protein localises to the cell inner membrane. The catalysed reaction is all-trans-octaprenyl diphosphate + 4-hydroxybenzoate = 4-hydroxy-3-(all-trans-octaprenyl)benzoate + diphosphate. The protein operates within cofactor biosynthesis; ubiquinone biosynthesis. Functionally, catalyzes the prenylation of para-hydroxybenzoate (PHB) with an all-trans polyprenyl group. Mediates the second step in the final reaction sequence of ubiquinone-8 (UQ-8) biosynthesis, which is the condensation of the polyisoprenoid side chain with PHB, generating the first membrane-bound Q intermediate 3-octaprenyl-4-hydroxybenzoate. This is 4-hydroxybenzoate octaprenyltransferase from Pseudomonas putida (strain GB-1).